Reading from the N-terminus, the 441-residue chain is Probable D-serine dehydratase (441 aa).

Lysine 115 carries the post-translational modification N6-(pyridoxal phosphate)lysine.

Belongs to the serine/threonine dehydratase family. DsdA subfamily. Requires pyridoxal 5'-phosphate as cofactor.

The enzyme catalyses D-serine = pyruvate + NH4(+). In Fusobacterium nucleatum subsp. nucleatum (strain ATCC 25586 / DSM 15643 / BCRC 10681 / CIP 101130 / JCM 8532 / KCTC 2640 / LMG 13131 / VPI 4355), this protein is Probable D-serine dehydratase.